Here is a 603-residue protein sequence, read N- to C-terminus: Podocalyxin-like protein 2 (603 aa).

A signal peptide spans 1–28 (MARPLRAARLPPPLLLLLAAGASLGAYA). Residues 29–499 (VGVDEPGPEG…ATQVRSDYGT (471 aa)) lie on the Extracellular side of the membrane. A disordered region spans residues 53-92 (FEPLDSEEPSEAMGLDAGLAPGSGFPSEDSEESRLLQPPQ). The O-linked (Xyl...) (chondroitin sulfate) serine glycan is linked to Ser-75. Tyr-93 carries the sulfotyrosine modification. N-linked (GlcNAc...) asparagine glycosylation is present at Asn-101. Residue Tyr-113 is modified to Sulfotyrosine. A disordered region spans residues 124 to 368 (SMEDPGQAPD…LEGQAAEAHS (245 aa)). A compositionally biased stretch (acidic residues) spans 156–187 (QEEEEEEEEEEEEREEEEREKEAEEEEEEEEL). Positions 196 to 216 (ATAQAHAPSPSTSSSTSSQSP) are enriched in low complexity. Polar residues-rich tracts occupy residues 240–266 (VKPTLSVPSVTPSTVAPGVQNYSQESG), 302–314 (ALPSSSLPQTVPP), and 339–349 (DTESTPSSATW). Asn-260 carries N-linked (GlcNAc...) asparagine glycosylation. A glycan (N-linked (GlcNAc...) asparagine) is linked at Asn-394. Residues 500-520 (LFVVLVIIGVICFIIIVLGLL) traverse the membrane as a helical segment. Over 521-603 (YNCWQRRMPK…SDVFEEDTHL (83 aa)) the chain is Cytoplasmic. Residues 558 to 570 (DSQSEMQEKQPSL) show a composition bias toward polar residues. Residues 558–603 (DSQSEMQEKQPSLNGGAINGPSSWSALMGSKRDPEDSDVFEEDTHL) are disordered. Residues Ser-569 and Ser-594 each carry the phosphoserine modification. A compositionally biased stretch (acidic residues) spans 592–603 (EDSDVFEEDTHL).

It belongs to the podocalyxin family. As to quaternary structure, homodimer; disulfide-linked. Interacts with SELL, SELE and SELP. In terms of processing, glycosylated; contains chondroitin sulfate. Displays sialylated O-linked oligosaccharides. Sulfation is necessary for interaction with SELL. Sialylated O-linked oligosaccharides are necessary for interaction with SELL, SELE and SELP.

The protein localises to the membrane. In terms of biological role, acts as a ligand for vascular selectins. Mediates rapid rolling of leukocytes over vascular surfaces through high affinity divalent cation-dependent interactions with E-, P- and L-selectins. This is Podocalyxin-like protein 2 (Podxl2) from Mus musculus (Mouse).